A 447-amino-acid chain; its full sequence is UDP-glycosyltransferase 76E5 (447 aa).

Residues Ser-272, 324–326, 341–349, and 363–366 each bind UDP-alpha-D-glucose; these read APQ, HCGWNSTLE, and NGEQ.

The protein belongs to the UDP-glycosyltransferase family.

In Arabidopsis thaliana (Mouse-ear cress), this protein is UDP-glycosyltransferase 76E5 (UGT76E5).